Consider the following 911-residue polypeptide: Chitin synthase G (911 aa).

Disordered stretches follow at residues 1-66 and 107-138; these read MAYQ…VSGY and GRVA…GGLR. The span at 12–34 shows a compositional bias: basic and acidic residues; sequence PHYDDNGHRLQDLPHGSYEEEAS. Residues 54–66 are compositionally biased toward polar residues; it reads QHGSSTTRPVSGY. The next 6 helical transmembrane spans lie at 579–599, 624–644, 659–679, 711–731, 840–860, and 879–899; these read IFST…TTVI, IINT…FILA, SFVV…YLVV, IIII…FMYL, LVTF…SDGV, and ALLW…CWFL.

The protein belongs to the chitin synthase family. Class III subfamily.

It is found in the cell membrane. It catalyses the reaction [(1-&gt;4)-N-acetyl-beta-D-glucosaminyl](n) + UDP-N-acetyl-alpha-D-glucosamine = [(1-&gt;4)-N-acetyl-beta-D-glucosaminyl](n+1) + UDP + H(+). In terms of biological role, polymerizes chitin, a structural polymer of the cell wall and septum, by transferring the sugar moiety of UDP-GlcNAc to the non-reducing end of the growing chitin polymer. This Aspergillus fumigatus (strain ATCC MYA-4609 / CBS 101355 / FGSC A1100 / Af293) (Neosartorya fumigata) protein is Chitin synthase G (chsG).